Here is a 236-residue protein sequence, read N- to C-terminus: H2HPP isomerase (236 aa).

Cupin type-1 domains are found at residues 40 to 106 and 151 to 215; these read YVPP…AIDI and NIPG…SKSV. 8 residues coordinate a divalent metal cation: H50, H52, Q56, H91, H162, H164, Q168, and H202. Substrate is bound at residue Y223.

Monomer. Fe(2+) is required as a cofactor. Requires Co(2+) as cofactor.

It localises to the cytoplasm. The catalysed reaction is 3-[(4R)-4-hydroxycyclohexa-1,5-dien-1-yl]-2-oxopropanoate = 3-[(1E,4R)-4-hydroxycyclohex-2-en-1-ylidene]pyruvate. Its pathway is antibiotic biosynthesis; bacilysin biosynthesis. Functionally, part of the bacABCDEF operon responsible for the biosynthesis of the nonribosomally synthesized dipeptide antibiotic bacilysin, composed of L-alanine and L-anticapsin. Bacilysin is an irreversible inactivator of the glutaminase domain of glucosamine synthetase. BacB catalyzes the allylic isomerization of the endocyclic-delta(4),delta(8)-7R-dihydro-hydroxyphenylpyruvate (en-H2HPP) to generate a mixture of 3E,7R- and 3Z, 7R-olefins of the exocyclic-delta(3),delta(5)-dihydro-hydroxyphenylpyruvate (ex-H2HPP). This is H2HPP isomerase from Bacillus subtilis.